A 435-amino-acid chain; its full sequence is Flavonol 7-O-rhamnosyltransferase (435 aa).

Residue glutamine 18 participates in UDP binding. Glutamine 18 is a UDP-beta-L-rhamnose binding site. Histidine 21 functions as the Proton acceptor in the catalytic mechanism. Histidine 21 contributes to the quercetin binding site. Aspartate 119 serves as the catalytic Charge relay. Positions 250, 315, 332, 336, 337, and 340 each coordinate UDP. 6 residues coordinate UDP-beta-L-rhamnose: serine 250, alanine 315, histidine 332, glycine 336, serine 337, and glutamate 340.

This sequence belongs to the UDP-glycosyltransferase family. As to expression, highly expressed in floral buds. Expressed in stems, leaves and flowers. Expressed at low levels in roots and siliques. Expressed on the adaxial side of cotyledons and emerging leaves, in trichomes, root columella cells, and the late elongation/early differentiation zone of roots.

It catalyses the reaction quercitrin + UDP-beta-L-rhamnose = quercetin 3,7-bis-O-alpha-L-rhamnoside + UDP + H(+). The enzyme catalyses quercetin 3-O-beta-D-glucoside + UDP-beta-L-rhamnose = quercetin 3-O-beta-D-glucoside-7-O-alpha-L-rhamnoside + UDP + H(+). It participates in flavonoid metabolism. Flavonol 7-O-rhamnosyltransferase that catalyzes the transfer of rhamnose from UDP-rhamnose to the 7-OH position of 3-O-glycosylated flavonols, such as kaempferol 3-O-rhamnoside, kaempferol 3-O-glucoside, quercetin 3-O-glucoside, quercetin 3-O-galactoside, quercetin 3-O-rhamnoside and isorhamnetin 3-O-glucoside. Is able to glycosylate the flavonols quercetin and kaempferol to yield quercetin 7-O-rhamnoside and kaempferol 7-O-rhamnoside. Shows a strict specificity for UDP-rhamnose as sugar donor. Does not act on 3-O-glycosylated anthocyanins. The accumulation of kaempferol 3-O-rhamnoside-7-O-rhamnoside inhibits basipetal auxin transport, which influences auxin distribution and plant organ development. This Arabidopsis thaliana (Mouse-ear cress) protein is Flavonol 7-O-rhamnosyltransferase.